The sequence spans 495 residues: Catalase (495 aa).

The disordered stretch occupies residues 1–25 (MSNNKKLTSLFGAPVSDRENSMTAG). Catalysis depends on residues His55 and Asn128. Tyr338 provides a ligand contact to heme.

The protein belongs to the catalase family. In terms of assembly, homodimer. Requires heme as cofactor.

The enzyme catalyses 2 H2O2 = O2 + 2 H2O. Decomposes hydrogen peroxide into water and oxygen; serves to protect cells from the toxic effects of hydrogen peroxide. The sequence is that of Catalase (katA) from Staphylococcus saprophyticus subsp. saprophyticus (strain ATCC 15305 / DSM 20229 / NCIMB 8711 / NCTC 7292 / S-41).